Consider the following 508-residue polypeptide: Transcription termination factor MTERF4, chloroplastic (508 aa).

The transit peptide at 1-79 (MMKSLFLFSA…PSLLDMERGR (79 aa)) directs the protein to the chloroplast. Low complexity predominate over residues 28-49 (RLTASASTSASSPPRAGCSRGP). Disordered regions lie at residues 28-69 (RLTA…LYAR) and 475-508 (FDTN…EFIE). A compositionally biased stretch (acidic residues) spans 484-508 (VEDEVEDEDLDEDSDYDSTDDEFIE).

Belongs to the mTERF family.

It localises to the plastid. The protein resides in the chloroplast stroma. Functionally, transcription termination factor required for processing and steady-state levels of plastid transcripts. Required for splicing of the chloroplastic group II intron. Required for the accumulation of 16S and 23S ribosomes. The polypeptide is Transcription termination factor MTERF4, chloroplastic (Oryza sativa subsp. japonica (Rice)).